The primary structure comprises 214 residues: UPF0301 protein NFA_55110 (214 aa).

The segment at 1–24 (MARADDPDERKTQGGHGDRRRREF) is disordered.

Belongs to the UPF0301 (AlgH) family.

The chain is UPF0301 protein NFA_55110 from Nocardia farcinica (strain IFM 10152).